Reading from the N-terminus, the 219-residue chain is Ribosome hibernation promotion factor (219 aa).

It belongs to the HPF/YfiA ribosome-associated protein family. Long HPF subfamily. Interacts with 100S ribosomes.

The protein localises to the cytoplasm. In terms of biological role, required for dimerization of active 70S ribosomes into 100S ribosomes in stationary phase; 100S ribosomes are translationally inactive and sometimes present during exponential growth. In Mycobacterium tuberculosis (strain ATCC 25618 / H37Rv), this protein is Ribosome hibernation promotion factor.